Consider the following 130-residue polypeptide: Small ribosomal subunit protein uS8 (130 aa).

The protein belongs to the universal ribosomal protein uS8 family. As to quaternary structure, part of the 30S ribosomal subunit. Contacts proteins S5 and S12.

Its function is as follows. One of the primary rRNA binding proteins, it binds directly to 16S rRNA central domain where it helps coordinate assembly of the platform of the 30S subunit. This chain is Small ribosomal subunit protein uS8, found in Alcanivorax borkumensis (strain ATCC 700651 / DSM 11573 / NCIMB 13689 / SK2).